The following is a 225-amino-acid chain: Small ribosomal subunit protein eS1 (225 aa).

It belongs to the eukaryotic ribosomal protein eS1 family.

This is Small ribosomal subunit protein eS1 from Methanococcus maripaludis (strain DSM 14266 / JCM 13030 / NBRC 101832 / S2 / LL).